The sequence spans 547 residues: MEPRAPPRLSVSSPRRESGATVPSHSPSTLLSCASSETATEKRRRWTGVLSVFGGVLVHVCLGTVYTWGTLAVYVVSYMRLLQIQSLQAASDASTLLERTSEEDGSSLSVFAFASAPSLVRLSDSAWVLASQFAGMTLGMPLGGIAQKTLGPCRTVILGGALMSLAVGMAPVLLHSYALFVTVFGVIQGVGLGLAYTAPLLCGLAWFPEKKGIVSGAITAGFGTGALLFSPLQAAFLNPLSIAPSQAPYASHPAELYYDVSDSDQLEILLRVPRLFRLLAVCYLLLVSAGAALLRVPAASPGVRTPGASACVFDEEAALVKSLEREEVRDETREEARATVSVRTALVSWTFWSLWTLFFLNGLAICFTASFWRLLAVDRNTRAYILTETQLALVGAAASACNAVGRLAWGHLADKRGFQTSLMGLSALWSLLLFFLPNAAPKGGLCYALAVSGSFFCLGGNFSVFPSAVASVFGPDAIGHLYGFIFGSQLASSLGFAYLTQRVAQTIGTDGLSTLMGLCTALTAMSVFCLPALSPTPRKRHSFQKQS.

The tract at residues Met1–Cys33 is disordered. Topologically, residues Met1 to Arg45 are cytoplasmic. Residues Thr21–Cys33 show a composition bias toward polar residues. The next 12 helical transmembrane spans lie at Trp46–Tyr66, Ala126–Ala146, Val167–Ile187, Gly189–Glu209, Gly212–Leu232, Leu278–Ala298, Ala345–Ile365, Ile385–Gly405, Gly417–Pro437, Leu445–Phe465, Ser467–Gly487, and Leu515–Pro535.

This sequence belongs to the major facilitator superfamily. In terms of assembly, interacts with apicoplast pyruvate carrier 2.

The protein localises to the plastid. It is found in the apicoplast. It localises to the membrane. Along with apicoplast pyruvate carrier 2, forms apicoplast pyruvate carrier (APC) complex, which transports pyruvate into the apicoplast and may also transport amino acids like methionine, serine, glycine and tryptophan with low efficiency. Required for maintaining pyruvate-dependent metabolic activities in the apicoplast, such as synthesis of fatty acids, isopentenyl pyrophosphate (IPP), dimethylallyl pyrophosphate (DMAPP) and methylerythritol 4-phosphate (MEP). Required for maintaining the integrity of the apicoplast. Required for normal parasite growth. This Toxoplasma gondii protein is Apicoplast pyruvate carrier 1.